The sequence spans 208 residues: MSPADSLLAAADNALRTLFAKPGAAEKSPADAVAEAALDPAEKRLAGALMRVNHVGEVCAQALYTAQAALTRDARLRARLQQAAREEIDHLAWTRQRLDALGARTSLLDPLWFAGAFALGLVAAKVGDRVSLGFVAETESQVAAHLQSHLQRLPQQDLASRAVVARMKDDEERHAAQARASGALALPAPVRAAMKAAARLMTSTAHYV.

Fe cation-binding residues include E57, E87, H90, E139, E171, and H174.

It belongs to the COQ7 family. Requires Fe cation as cofactor.

It localises to the cell membrane. The catalysed reaction is a 5-methoxy-2-methyl-3-(all-trans-polyprenyl)benzene-1,4-diol + AH2 + O2 = a 3-demethylubiquinol + A + H2O. The protein operates within cofactor biosynthesis; ubiquinone biosynthesis. Functionally, catalyzes the hydroxylation of 2-nonaprenyl-3-methyl-6-methoxy-1,4-benzoquinol during ubiquinone biosynthesis. The protein is 3-demethoxyubiquinol 3-hydroxylase of Verminephrobacter eiseniae (strain EF01-2).